A 350-amino-acid chain; its full sequence is FAD:protein FMN transferase (350 aa).

The N-terminal stretch at 1–19 (MDMTFFRAALLGACVLLSG) is a signal peptide. Cys-20 carries the N-palmitoyl cysteine lipid modification. The S-diacylglycerol cysteine moiety is linked to residue Cys-20. FAD contacts are provided by residues Met-41, Trp-78, 119 to 121 (AMD), and Asp-181. Residue Thr-184 participates in Mg(2+) binding. 2 residues coordinate FAD: Glu-187 and Ile-272. Positions 298, 301, and 302 each coordinate Mg(2+).

This sequence belongs to the ApbE family. The cofactor is Mg(2+).

The protein localises to the cell inner membrane. The enzyme catalyses L-threonyl-[protein] + FAD = FMN-L-threonyl-[protein] + AMP + H(+). Its function is as follows. Flavin transferase that catalyzes the transfer of the FMN moiety of FAD and its covalent binding to the hydroxyl group of a threonine residue in a target flavoprotein such as NqrB and NqrC, two subunits of the NQR complex. The chain is FAD:protein FMN transferase from Klebsiella pneumoniae (strain 342).